We begin with the raw amino-acid sequence, 384 residues long: Tryptophan--tRNA ligase (384 aa).

Residues P81–H89 carry the 'HIGH' region motif. Residues K252–S256 carry the 'KMSKS' region motif.

It belongs to the class-I aminoacyl-tRNA synthetase family.

Its subcellular location is the cytoplasm. The catalysed reaction is tRNA(Trp) + L-tryptophan + ATP = L-tryptophyl-tRNA(Trp) + AMP + diphosphate + H(+). The chain is Tryptophan--tRNA ligase from Thermococcus sibiricus (strain DSM 12597 / MM 739).